A 548-amino-acid chain; its full sequence is Beta-caryophyllene synthase (548 aa).

(2E,6E)-farnesyl diphosphate-binding residues include R268, D305, D309, R446, and D449. Mg(2+) is bound by residues D305 and D309. Residues 305-309 (DDIYD) carry the DDXXD motif motif. 2 residues coordinate Mg(2+): D449 and E457.

Belongs to the terpene synthase family. Mg(2+) serves as cofactor.

The catalysed reaction is (2E,6E)-farnesyl diphosphate = (-)-(E)-beta-caryophyllene + diphosphate. It functions in the pathway secondary metabolite biosynthesis; terpenoid biosynthesis. Its function is as follows. Sesquiterpene synthase that catalyzes the formation of sesquiterpenes and sesquiterpenoid alcohols. Converts farnesyl diphosphate (FPP) to beta-caryophyllene. Can use geranyl diphosphate (GPP) to produce myrcene, limonene and camphene. This is Beta-caryophyllene synthase from Lavandula angustifolia (Lavender).